We begin with the raw amino-acid sequence, 242 residues long: Venom nerve growth factor 1 (242 aa).

The first 18 residues, 1–18 (MSMLCYTLIIAFLIGIWA), serve as a signal peptide directing secretion. The propeptide occupies 19–125 (APQSEDNVPL…ALNRNIQAKR (107 aa)). Cystine bridges form between C139/C203, C181/C231, and C191/C233.

It belongs to the NGF-beta family. In terms of assembly, homodimer; non-covalently linked. Expressed by the venom gland.

It localises to the secreted. Nerve growth factor is important for the development and maintenance of the sympathetic and sensory nervous systems. It stimulates division and differentiation of sympathetic and embryonic sensory neurons as well as basal forebrain cholinergic neurons in the brain. Its relevance in the snake venom is not clear. However, it has been shown to inhibit metalloproteinase-dependent proteolysis of platelet glycoprotein Ib alpha, suggesting a metalloproteinase inhibition to prevent metalloprotease autodigestion and/or protection against prey proteases. Binds a lipid between the two protein chains in the homodimer. The lipid-bound form promotes histamine relase from mouse mast cells, contrary to the lipid-free form. The protein is Venom nerve growth factor 1 of Pseudechis australis (Mulga snake).